A 390-amino-acid chain; its full sequence is 1-deoxy-D-xylulose 5-phosphate reductoisomerase (390 aa).

Positions 10, 11, 12, 13, 36, 37, 38, and 121 each coordinate NADPH. K122 is a 1-deoxy-D-xylulose 5-phosphate binding site. E123 lines the NADPH pocket. D147 lines the Mn(2+) pocket. Residues S148, E149, S173, and H196 each contribute to the 1-deoxy-D-xylulose 5-phosphate site. Position 149 (E149) interacts with Mn(2+). G202 is an NADPH binding site. Residues S209, N214, K215, and E218 each coordinate 1-deoxy-D-xylulose 5-phosphate. Position 218 (E218) interacts with Mn(2+). The segment at 367–390 is disordered; it reads AASEHGRREAEKRVGARAHAPASR. Over residues 370-380 the composition is skewed to basic and acidic residues; it reads EHGRREAEKRV.

Belongs to the DXR family. Requires Mg(2+) as cofactor. The cofactor is Mn(2+).

The catalysed reaction is 2-C-methyl-D-erythritol 4-phosphate + NADP(+) = 1-deoxy-D-xylulose 5-phosphate + NADPH + H(+). It participates in isoprenoid biosynthesis; isopentenyl diphosphate biosynthesis via DXP pathway; isopentenyl diphosphate from 1-deoxy-D-xylulose 5-phosphate: step 1/6. Its function is as follows. Catalyzes the NADPH-dependent rearrangement and reduction of 1-deoxy-D-xylulose-5-phosphate (DXP) to 2-C-methyl-D-erythritol 4-phosphate (MEP). This chain is 1-deoxy-D-xylulose 5-phosphate reductoisomerase, found in Anaeromyxobacter dehalogenans (strain 2CP-1 / ATCC BAA-258).